We begin with the raw amino-acid sequence, 221 residues long: ATP synthase subunit delta (221 aa).

Over residues methionine 1 to glutamate 13 the composition is skewed to basic and acidic residues. Residues methionine 1–proline 31 are disordered.

The protein belongs to the ATPase delta chain family. In terms of assembly, F-type ATPases have 2 components, F(1) - the catalytic core - and F(0) - the membrane proton channel. F(1) has five subunits: alpha(3), beta(3), gamma(1), delta(1), epsilon(1). F(0) has three main subunits: a(1), b(2) and c(10-14). The alpha and beta chains form an alternating ring which encloses part of the gamma chain. F(1) is attached to F(0) by a central stalk formed by the gamma and epsilon chains, while a peripheral stalk is formed by the delta and b chains.

It localises to the cell inner membrane. Its function is as follows. F(1)F(0) ATP synthase produces ATP from ADP in the presence of a proton or sodium gradient. F-type ATPases consist of two structural domains, F(1) containing the extramembraneous catalytic core and F(0) containing the membrane proton channel, linked together by a central stalk and a peripheral stalk. During catalysis, ATP synthesis in the catalytic domain of F(1) is coupled via a rotary mechanism of the central stalk subunits to proton translocation. Functionally, this protein is part of the stalk that links CF(0) to CF(1). It either transmits conformational changes from CF(0) to CF(1) or is implicated in proton conduction. In Granulibacter bethesdensis (strain ATCC BAA-1260 / CGDNIH1), this protein is ATP synthase subunit delta.